Consider the following 408-residue polypeptide: Glutathione-independent formaldehyde dehydrogenase (408 aa).

Cys-61 serves as a coordination point for Zn(2+). Gly-62, Ser-63, and His-66 together coordinate NAD(+). Positions 82, 112, 115, 118, 126, and 184 each coordinate Zn(2+). Positions 212, 232, 237, 277, 284, 311, 313, 348, and 350 each coordinate NAD(+).

This sequence belongs to the zinc-containing alcohol dehydrogenase family. Zn(2+) is required as a cofactor.

It carries out the reaction formaldehyde + NAD(+) + H2O = formate + NADH + 2 H(+). With respect to regulation, activity is not inhibited by EDTA, which is probably not sufficient to displace the bound metal. Dehydrogenase that catalyzes the NAD(+)-dependent oxidation of formaldehyde. Exhibits lower activity with acetaldehyde (about 10-fold lower than for formaldehyde), but cannot use methanol, ethanol, 1-butanol, glyoxal or formic acid. Is involved in formaldehyde detoxification. The sequence is that of Glutathione-independent formaldehyde dehydrogenase from Bacillus subtilis (strain 168).